A 458-amino-acid polypeptide reads, in one-letter code: Protein adenylyltransferase FICD (458 aa).

Over 1–23 the chain is Cytoplasmic; that stretch reads MMLIPMASVMAVTEPKWVSVWSR. A helical; Signal-anchor for type II membrane protein membrane pass occupies residues 24–44; sequence FLWVTLLSMVLGSLLALLLPL. At 45 to 458 the chain is on the lumenal side; that stretch reads GAVEEQCLAV…GFKETLPVKP (414 aa). Ser-79 is subject to O-AMP-serine; by autocatalysis. Position 80 is an O-AMP-threonine; by autocatalysis (Thr-80). 2 TPR repeats span residues 106–139 and 140–173; these read ARAA…DPDF and VDAL…SPYH. At Thr-183 the chain carries O-AMP-threonine; by autocatalysis. The Inhibitory (S/T)XXXE(G/N) motif signature appears at 230-235; it reads TVAIEG. Glu-234 lines the ATP pocket. Asn-275 carries N-linked (GlcNAc...) asparagine glycosylation. The region spanning 285–420 is the Fido domain; sequence VTISDVLEIH…VRPFIRFIAK (136 aa). 316–319 lines the ATP pocket; that stretch reads VGHH. His-363 is an active-site residue. Residues 367 to 374, 399 to 400, and Asn-407 each bind ATP; these read DGNGRTSR and YY. Residue Asn-446 is glycosylated (N-linked (GlcNAc...) asparagine).

This sequence belongs to the fic family. In terms of assembly, homodimer. Interacts with HD. It depends on Mg(2+) as a cofactor. Mn(2+) serves as cofactor. Post-translationally, auto-AMPylated in vitro; it is unclear whether auto-AMPylation is relevant in vivo. N-glycosylated; predominantly glycosylated at Asn-275. Ubiquitous.

Its subcellular location is the endoplasmic reticulum membrane. The catalysed reaction is L-tyrosyl-[protein] + ATP = O-(5'-adenylyl)-L-tyrosyl-[protein] + diphosphate. The enzyme catalyses 3-O-(5'-adenylyl)-L-threonyl-[protein] + H2O = L-threonyl-[protein] + AMP + H(+). It catalyses the reaction L-threonyl-[protein] + ATP = 3-O-(5'-adenylyl)-L-threonyl-[protein] + diphosphate. The side chain of Glu-234 determines which of the two opposing activities (AMPylase or de-AMPylase) will take place. In response to endoplasmic reticulum stress, mediates de-AMPylase activity. Adenylyltransferase activity is inhibited by the inhibitory helix present at the N-terminus: Glu-234 binds ATP and competes with ATP-binding at Arg-374, thereby preventing adenylyltransferase activity. In unstressed cells, disengagement of Glu-234 promotes adenylyltransferase activity. Activation dissociates ATP-binding from Glu-234, allowing ordered binding of the entire ATP moiety with the alpha-phosphate in an orientation that is productive for accepting an incoming target hydroxyl side chain. Functionally, protein that can both mediate the addition of adenosine 5'-monophosphate (AMP) to specific residues of target proteins (AMPylation), and the removal of the same modification from target proteins (de-AMPylation), depending on the context. The side chain of Glu-231 determines which of the two opposing activities (AMPylase or de-AMPylase) will take place. Acts as a key regulator of the ERN1/IRE1-mediated unfolded protein response (UPR) by mediating AMPylation or de-AMPylation of HSPA5/BiP. In unstressed cells, acts as an adenylyltransferase by mediating AMPylation of HSPA5/BiP at 'Thr-518', thereby inactivating it. In response to endoplasmic reticulum stress, acts as a phosphodiesterase by mediating removal of ATP (de-AMPylation) from HSPA5/BiP at 'Thr-518', leading to restore HSPA5/BiP activity. Although it is able to AMPylate RhoA, Rac and Cdc42 Rho GTPases in vitro, Rho GTPases do not constitute physiological substrates. The chain is Protein adenylyltransferase FICD from Homo sapiens (Human).